A 289-amino-acid chain; its full sequence is ATP synthase subunit a (289 aa).

6 consecutive transmembrane segments (helical) span residues 43–63, 104–124, 160–180, 193–213, 232–252, and 259–279; these read AFHVDTLGWSVLLGVVFLFIF, IAPLALTVFVWIFLLNLIDLV, ISVFALIVFYSIKVKGIGGFL, IVVQILLIPVNFLLEFVTLIA, IFILIAVMFGSGMFLLSALGV, and AVFHILIITLQAFIFMMLTIV.

Belongs to the ATPase A chain family. F-type ATPases have 2 components, CF(1) - the catalytic core - and CF(0) - the membrane proton channel. CF(1) has five subunits: alpha(3), beta(3), gamma(1), delta(1), epsilon(1). CF(0) has three main subunits: a(1), b(2) and c(9-12). The alpha and beta chains form an alternating ring which encloses part of the gamma chain. CF(1) is attached to CF(0) by a central stalk formed by the gamma and epsilon chains, while a peripheral stalk is formed by the delta and b chains.

The protein resides in the cell inner membrane. In terms of biological role, key component of the proton channel; it plays a direct role in the translocation of protons across the membrane. In Pseudomonas paraeruginosa (strain DSM 24068 / PA7) (Pseudomonas aeruginosa (strain PA7)), this protein is ATP synthase subunit a.